The sequence spans 190 residues: Nucleoside triphosphate pyrophosphatase (190 aa).

The active-site Proton acceptor is the D69.

This sequence belongs to the Maf family. It depends on a divalent metal cation as a cofactor.

It localises to the cytoplasm. The catalysed reaction is a ribonucleoside 5'-triphosphate + H2O = a ribonucleoside 5'-phosphate + diphosphate + H(+). The enzyme catalyses a 2'-deoxyribonucleoside 5'-triphosphate + H2O = a 2'-deoxyribonucleoside 5'-phosphate + diphosphate + H(+). Its function is as follows. Nucleoside triphosphate pyrophosphatase. May have a dual role in cell division arrest and in preventing the incorporation of modified nucleotides into cellular nucleic acids. The sequence is that of Nucleoside triphosphate pyrophosphatase from Helicobacter pylori (strain J99 / ATCC 700824) (Campylobacter pylori J99).